Consider the following 254-residue polypeptide: PF03932 family protein CutC (254 aa).

This sequence belongs to the CutC family.

The protein localises to the cytoplasm. This Yersinia pseudotuberculosis serotype I (strain IP32953) protein is PF03932 family protein CutC.